A 540-amino-acid polypeptide reads, in one-letter code: Beta-secretase (540 aa).

Positions 1–31 (MHFSLPTSRIVVVVPAAAICIVCVLIETCTA) are cleaved as a signal peptide. In terms of domain architecture, Peptidase A1 spans 81 to 435 (YYIEVDIGTP…DRENKRVGFA (355 aa)). Active-site residues include aspartate 99 and aspartate 302. 3 disulfides stabilise this stretch: cysteine 222–cysteine 439, cysteine 291–cysteine 469, and cysteine 345–cysteine 397. Residues 483 to 503 (ITAYVLAAICLVCLIPVIVFA) traverse the membrane as a helical segment. Residues 504–540 (LTHQINKRCKGRRGRGVVNHHRLDQEGLAENEPNSDP) lie on the Cytoplasmic side of the membrane.

It belongs to the peptidase A1 family.

It localises to the membrane. The protein is Beta-secretase of Strongylocentrotus purpuratus (Purple sea urchin).